We begin with the raw amino-acid sequence, 401 residues long: MTQDASPILTSLLDTDAYKLHMQQAVFHRYRHITVAAEFRCRGDELLGEYADEIRHQITLMSQLALTDDEYQYLSGLPFFKNDYLNWLRAFRFNPEQVTVSDNDGELDIRITGLWCETILWEVPLLAVISEIVHRRRSAHVTADLAVSQLRSKLQQFNALSADIDITHFKLMDFGTRRRFSREIQHAIVSHLKDEFPYLVGTSNYDLARKLSLDPVGTQAHEWFQAHQQISPVLANSQRVALQAWLDEYPNQLGVALTDCITMDAFLRDFDKTFADRYQGLRHDSGDPVEWGEKAIAHYEKLGIDPMSKTLVFSDNLDLEKALSLYRHFYQRVKLVFGIGTRLTCDIPGIKPLNIVIKLVECNDKPVAKLSDSPGKTICHDPAFVDELREAFALPLVKKAS.

Phosphohistidine; by autocatalysis is present on His221.

It belongs to the NAPRTase family. In terms of processing, transiently phosphorylated on a His residue during the reaction cycle. Phosphorylation strongly increases the affinity for substrates and increases the rate of nicotinate D-ribonucleotide production. Dephosphorylation regenerates the low-affinity form of the enzyme, leading to product release.

It carries out the reaction nicotinate + 5-phospho-alpha-D-ribose 1-diphosphate + ATP + H2O = nicotinate beta-D-ribonucleotide + ADP + phosphate + diphosphate. It functions in the pathway cofactor biosynthesis; NAD(+) biosynthesis; nicotinate D-ribonucleotide from nicotinate: step 1/1. Catalyzes the synthesis of beta-nicotinate D-ribonucleotide from nicotinate and 5-phospho-D-ribose 1-phosphate at the expense of ATP. This chain is Nicotinate phosphoribosyltransferase, found in Yersinia enterocolitica serotype O:8 / biotype 1B (strain NCTC 13174 / 8081).